Consider the following 440-residue polypeptide: Putative short-chain fatty acid transporter (440 aa).

At 1 to 19 the chain is on the periplasmic side; sequence MIGRISRFMTRFVSRWLPD. Residues 20-40 traverse the membrane as a helical segment; the sequence is PLIFAMLLTLLTFVIALWLTP. The Cytoplasmic segment spans residues 41–53; the sequence is QTPISMVKMWGDG. Residues 54–74 form a helical membrane-spanning segment; the sequence is FWNLLAFGMQMALIIVTGHAL. At 75–102 the chain is on the periplasmic side; that stretch reads ASSAPVKSLLRTAASAAKTPVQGVMLVT. Residues 103-123 form a helical membrane-spanning segment; sequence FFGSVACVINWGFGLVVGAMF. Residues 124–137 are Cytoplasmic-facing; the sequence is AREVARRVPGSDYP. The next 2 helical transmembrane spans lie at 138–158 and 159–179; these read LLIACAYIGFLTWGGGFSGSM and PLLAATPGNPVEHIAGLIPVG. Position 180 (Asp-180) is a topological domain, cytoplasmic. The helical transmembrane segment at 181–201 threads the bilayer; the sequence is TLFSGFNIFITVALIVVMPFI. Residues 202–244 are Periplasmic-facing; it reads TRMMMPKPSDVVSIDPKLLMEEADFQKQLPKDAPPSERLEESR. 2 helical membrane-spanning segments follow: residues 245–265 and 266–286; these read ILTLIIGALGIAYLAMYFSEH and GFNITINTVNLMFMIAGLLLH. Residues 287–313 are Periplasmic-facing; that stretch reads KTPMAYMRAISAAARSTAGILVQFPFY. A helical transmembrane segment spans residues 314–334; sequence AGIQLMMEHSGLGGLITEFFI. Residues 335-351 lie on the Cytoplasmic side of the membrane; the sequence is NVANKDTFPVMTFFSSA. Residues 352–372 form a helical membrane-spanning segment; sequence LINFAVPSGGGHWVIQGPFVI. Residues 373 to 394 lie on the Periplasmic side of the membrane; the sequence is PAAQALGADLGKSVMAIAYGEQ. Residues 395 to 415 form a helical membrane-spanning segment; sequence WMNMAQPFWALPALAIAGLGV. Over 416 to 419 the chain is Cytoplasmic; the sequence is RDIM. Residues 420–440 form a helical membrane-spanning segment; it reads GYCITALLFSGVIFVIGLTLF.

Its subcellular location is the cell inner membrane. May be responsible for the uptake of short-chain fatty acids. The sequence is that of Putative short-chain fatty acid transporter (atoE) from Escherichia coli (strain K12).